Reading from the N-terminus, the 496-residue chain is Glycerol kinase (496 aa).

Thr11 lines the ADP pocket. Thr11, Thr12, and Ser13 together coordinate ATP. A sn-glycerol 3-phosphate-binding site is contributed by Thr11. Arg15 contributes to the ADP binding site. Sn-glycerol 3-phosphate is bound by residues Arg81, Glu82, Tyr133, and Asp242. Arg81, Glu82, Tyr133, Asp242, and Gln243 together coordinate glycerol. ADP contacts are provided by Thr264 and Gly307. ATP is bound by residues Thr264, Gly307, Gln311, and Gly408. The ADP site is built by Gly408 and Asn412.

The protein belongs to the FGGY kinase family.

The enzyme catalyses glycerol + ATP = sn-glycerol 3-phosphate + ADP + H(+). Its pathway is polyol metabolism; glycerol degradation via glycerol kinase pathway; sn-glycerol 3-phosphate from glycerol: step 1/1. Inhibited by fructose 1,6-bisphosphate (FBP). Its function is as follows. Key enzyme in the regulation of glycerol uptake and metabolism. Catalyzes the phosphorylation of glycerol to yield sn-glycerol 3-phosphate. The chain is Glycerol kinase from Trichlorobacter lovleyi (strain ATCC BAA-1151 / DSM 17278 / SZ) (Geobacter lovleyi).